The chain runs to 281 residues: ATP phosphoribosyltransferase (281 aa).

It belongs to the ATP phosphoribosyltransferase family. Long subfamily. It depends on Mg(2+) as a cofactor.

Its subcellular location is the cytoplasm. The enzyme catalyses 1-(5-phospho-beta-D-ribosyl)-ATP + diphosphate = 5-phospho-alpha-D-ribose 1-diphosphate + ATP. The protein operates within amino-acid biosynthesis; L-histidine biosynthesis; L-histidine from 5-phospho-alpha-D-ribose 1-diphosphate: step 1/9. With respect to regulation, feedback inhibited by histidine. Its function is as follows. Catalyzes the condensation of ATP and 5-phosphoribose 1-diphosphate to form N'-(5'-phosphoribosyl)-ATP (PR-ATP). Has a crucial role in the pathway because the rate of histidine biosynthesis seems to be controlled primarily by regulation of HisG enzymatic activity. The chain is ATP phosphoribosyltransferase (hisG) from Archaeoglobus fulgidus (strain ATCC 49558 / DSM 4304 / JCM 9628 / NBRC 100126 / VC-16).